The sequence spans 331 residues: Glucokinase (331 aa).

13 to 18 is an ATP binding site; that stretch reads GDIGGT.

This sequence belongs to the bacterial glucokinase family.

The protein resides in the cytoplasm. It carries out the reaction D-glucose + ATP = D-glucose 6-phosphate + ADP + H(+). The chain is Glucokinase from Caulobacter vibrioides (strain ATCC 19089 / CIP 103742 / CB 15) (Caulobacter crescentus).